The sequence spans 147 residues: uncharacterized protein (147 aa).

Positions 2 to 63 (LDELDKKIIG…KLNYENIGYD (62 aa)) constitute an HTH asnC-type domain. The segment at residues 21 to 40 (YREIAKELNVAVGTIYNRIK) is a DNA-binding region (H-T-H motif).

This is an uncharacterized protein from Pyrococcus abyssi (strain GE5 / Orsay).